The chain runs to 229 residues: Ribonuclease 3 (229 aa).

Residues 5–127 (LSRLERQLGY…LIGAIYLDAG (123 aa)) form the RNase III domain. E40 is a Mg(2+) binding site. D44 is a catalytic residue. Residues D113 and E116 each coordinate Mg(2+). E116 is a catalytic residue. Residues 154 to 224 (DPKTRLQEFL…AAAALIALGV (71 aa)) form the DRBM domain.

It belongs to the ribonuclease III family. In terms of assembly, homodimer. It depends on Mg(2+) as a cofactor.

It localises to the cytoplasm. It catalyses the reaction Endonucleolytic cleavage to 5'-phosphomonoester.. Its function is as follows. Digests double-stranded RNA. Involved in the processing of primary rRNA transcript to yield the immediate precursors to the large and small rRNAs (23S and 16S). Processes some mRNAs, and tRNAs when they are encoded in the rRNA operon. Processes pre-crRNA and tracrRNA of type II CRISPR loci if present in the organism. The chain is Ribonuclease 3 from Pseudomonas fluorescens (strain Pf0-1).